The following is a 267-amino-acid chain: Small ribosomal subunit protein mS23 (267 aa).

The interval 230–267 (VKTASKDGKSSNGSMGAEDVVEKTTSAWETEFVEEESS) is disordered.

This sequence belongs to the mitochondrion-specific ribosomal protein mS23 family. As to quaternary structure, component of the mitochondrial small ribosomal subunit.

The protein localises to the mitochondrion. This chain is Small ribosomal subunit protein mS23 (RSM25), found in Meyerozyma guilliermondii (strain ATCC 6260 / CBS 566 / DSM 6381 / JCM 1539 / NBRC 10279 / NRRL Y-324) (Yeast).